The following is a 405-amino-acid chain: S-adenosylmethionine:tRNA ribosyltransferase-isomerase (405 aa).

This sequence belongs to the QueA family. Monomer.

It is found in the cytoplasm. It catalyses the reaction 7-aminomethyl-7-carbaguanosine(34) in tRNA + S-adenosyl-L-methionine = epoxyqueuosine(34) in tRNA + adenine + L-methionine + 2 H(+). The protein operates within tRNA modification; tRNA-queuosine biosynthesis. Its function is as follows. Transfers and isomerizes the ribose moiety from AdoMet to the 7-aminomethyl group of 7-deazaguanine (preQ1-tRNA) to give epoxyqueuosine (oQ-tRNA). This chain is S-adenosylmethionine:tRNA ribosyltransferase-isomerase, found in Psychrobacter cryohalolentis (strain ATCC BAA-1226 / DSM 17306 / VKM B-2378 / K5).